An 840-amino-acid polypeptide reads, in one-letter code: Cytosolic carboxypeptidase 2 (840 aa).

One can recognise a Peptidase M14 domain in the interval 358–628; that stretch reads YPYTYTDLQC…HVCDTLLDFC (271 aa). Residues H424, E427, and H520 each coordinate Zn(2+). Residue E592 is the Proton donor/acceptor of the active site. The segment covering 706-719 has biased composition (basic residues); the sequence is MFKKKKKKSLQTRK. Disordered regions lie at residues 706–726 and 758–789; these read MFKK…EQYQ and ESSS…LDPS.

Belongs to the peptidase M14 family. Interacts with RARRES1, KIF11 and MAPRE1. Requires Zn(2+) as cofactor.

It localises to the cytoplasm. Its subcellular location is the cytosol. The protein resides in the cytoskeleton. It is found in the microtubule organizing center. The protein localises to the centrosome. It localises to the centriole. Its subcellular location is the cilium basal body. The catalysed reaction is (L-glutamyl)(n+1)-gamma-L-glutamyl-L-glutamyl-[protein] + H2O = (L-glutamyl)(n)-gamma-L-glutamyl-L-glutamyl-[protein] + L-glutamate. Its activity is regulated as follows. Inhibited by RARRES1. Its function is as follows. Metallocarboxypeptidase that mediates deglutamylation of tubulin and non-tubulin target proteins. Catalyzes the removal of polyglutamate side chains present on the gamma-carboxyl group of glutamate residues within the C-terminal tail of tubulin protein. Specifically cleaves tubulin long-side-chains, while it is not able to remove the branching point glutamate. Also catalyzes the removal of polyglutamate residues from the carboxy-terminus of non-tubulin proteins such as MYLK. The protein is Cytosolic carboxypeptidase 2 (AGBL2) of Macaca fascicularis (Crab-eating macaque).